The chain runs to 160 residues: 6,7-dimethyl-8-ribityllumazine synthase (160 aa).

Residues Phe-22, 57–59 (TYE), and 81–83 (TII) each bind 5-amino-6-(D-ribitylamino)uracil. 86–87 (QT) serves as a coordination point for (2S)-2-hydroxy-3-oxobutyl phosphate. His-89 acts as the Proton donor in catalysis. Residue Leu-114 participates in 5-amino-6-(D-ribitylamino)uracil binding. (2S)-2-hydroxy-3-oxobutyl phosphate is bound at residue Arg-128.

The protein belongs to the DMRL synthase family. Forms an icosahedral capsid composed of 60 subunits, arranged as a dodecamer of pentamers.

The catalysed reaction is (2S)-2-hydroxy-3-oxobutyl phosphate + 5-amino-6-(D-ribitylamino)uracil = 6,7-dimethyl-8-(1-D-ribityl)lumazine + phosphate + 2 H2O + H(+). It functions in the pathway cofactor biosynthesis; riboflavin biosynthesis; riboflavin from 2-hydroxy-3-oxobutyl phosphate and 5-amino-6-(D-ribitylamino)uracil: step 1/2. Catalyzes the formation of 6,7-dimethyl-8-ribityllumazine by condensation of 5-amino-6-(D-ribitylamino)uracil with 3,4-dihydroxy-2-butanone 4-phosphate. This is the penultimate step in the biosynthesis of riboflavin. This chain is 6,7-dimethyl-8-ribityllumazine synthase, found in Buchnera aphidicola subsp. Acyrthosiphon pisum (strain APS) (Acyrthosiphon pisum symbiotic bacterium).